A 327-amino-acid polypeptide reads, in one-letter code: N-acetylmuramoyl-L-alanine amidase sle1 (327 aa).

The signal sequence occupies residues 1–25 (MRKKIIATVIGTSALAAVTWTNADA). 3 consecutive LysM domains span residues 27 to 70 (TTYK…SLKV), 86 to 129 (STYT…KLKV), and 150 to 193 (TTYT…KLKV). The segment at 68-89 (LKVSGSTSSSTSSNTSTGSTYT) is disordered. A compositionally biased stretch (low complexity) spans 71–87 (SGSTSSSTSSNTSTGST). Residues 203–327 (GSSSTGSAGY…SQVSSYVYIH (125 aa)) form the Peptidase C51 domain.

The protein localises to the secreted. It is found in the cell surface. The catalysed reaction is Hydrolyzes the link between N-acetylmuramoyl residues and L-amino acid residues in certain cell-wall glycopeptides.. Peptidoglycan hydrolase involved in the splitting of the septum during cell division. The polypeptide is N-acetylmuramoyl-L-alanine amidase sle1 (sle1) (Staphylococcus saprophyticus subsp. saprophyticus (strain ATCC 15305 / DSM 20229 / NCIMB 8711 / NCTC 7292 / S-41)).